Reading from the N-terminus, the 209-residue chain is Uracil phosphoribosyltransferase (209 aa).

5-phospho-alpha-D-ribose 1-diphosphate is bound by residues arginine 79, arginine 104, and 131–139; that span reads DPMLATGGS. Uracil-binding positions include isoleucine 194 and 199–201; that span reads GDA. A 5-phospho-alpha-D-ribose 1-diphosphate-binding site is contributed by aspartate 200.

The protein belongs to the UPRTase family. Mg(2+) is required as a cofactor.

The enzyme catalyses UMP + diphosphate = 5-phospho-alpha-D-ribose 1-diphosphate + uracil. Its pathway is pyrimidine metabolism; UMP biosynthesis via salvage pathway; UMP from uracil: step 1/1. Its activity is regulated as follows. Allosterically activated by GTP. Catalyzes the conversion of uracil and 5-phospho-alpha-D-ribose 1-diphosphate (PRPP) to UMP and diphosphate. In Lactobacillus delbrueckii subsp. bulgaricus (strain ATCC 11842 / DSM 20081 / BCRC 10696 / JCM 1002 / NBRC 13953 / NCIMB 11778 / NCTC 12712 / WDCM 00102 / Lb 14), this protein is Uracil phosphoribosyltransferase.